The sequence spans 314 residues: Ribosomal protein L11 methyltransferase (314 aa).

S-adenosyl-L-methionine is bound by residues threonine 161, glycine 182, aspartate 204, and asparagine 248.

It belongs to the methyltransferase superfamily. PrmA family.

Its subcellular location is the cytoplasm. It carries out the reaction L-lysyl-[protein] + 3 S-adenosyl-L-methionine = N(6),N(6),N(6)-trimethyl-L-lysyl-[protein] + 3 S-adenosyl-L-homocysteine + 3 H(+). Its function is as follows. Methylates ribosomal protein L11. The polypeptide is Ribosomal protein L11 methyltransferase (Listeria monocytogenes serotype 1/2a (strain 10403S)).